The following is a 396-amino-acid chain: S-adenosylmethionine synthase (396 aa).

An ATP-binding site is contributed by histidine 16. A Mg(2+)-binding site is contributed by aspartate 18. A K(+)-binding site is contributed by glutamate 44. The L-methionine site is built by glutamate 57 and glutamine 100. The interval 100–110 (QSPDIAQGVDR) is flexible loop. Residues 167–169 (DAK), 232–233 (RF), aspartate 241, 247–248 (RK), alanine 264, and lysine 268 each bind ATP. Aspartate 241 contacts L-methionine. An L-methionine-binding site is contributed by lysine 272.

Belongs to the AdoMet synthase family. In terms of assembly, homotetramer; dimer of dimers. Mg(2+) is required as a cofactor. The cofactor is K(+).

It localises to the cytoplasm. The catalysed reaction is L-methionine + ATP + H2O = S-adenosyl-L-methionine + phosphate + diphosphate. It participates in amino-acid biosynthesis; S-adenosyl-L-methionine biosynthesis; S-adenosyl-L-methionine from L-methionine: step 1/1. In terms of biological role, catalyzes the formation of S-adenosylmethionine (AdoMet) from methionine and ATP. The overall synthetic reaction is composed of two sequential steps, AdoMet formation and the subsequent tripolyphosphate hydrolysis which occurs prior to release of AdoMet from the enzyme. The protein is S-adenosylmethionine synthase of Ralstonia nicotianae (strain ATCC BAA-1114 / GMI1000) (Ralstonia solanacearum).